The primary structure comprises 548 residues: Probable malate:quinone oxidoreductase (548 aa).

Belongs to the MQO family. The cofactor is FAD.

It carries out the reaction (S)-malate + a quinone = a quinol + oxaloacetate. Its pathway is carbohydrate metabolism; tricarboxylic acid cycle; oxaloacetate from (S)-malate (quinone route): step 1/1. The sequence is that of Probable malate:quinone oxidoreductase from Escherichia coli O6:H1 (strain CFT073 / ATCC 700928 / UPEC).